Reading from the N-terminus, the 621-residue chain is Probable serine/threonine-protein kinase WNK2 (621 aa).

Residues 28–286 enclose the Protein kinase domain; the sequence is GRYTEVLGKG…AQELLMDPFL (259 aa). Residues 108–111 and Lys158 contribute to the ATP site; that span reads TEVF. Asp175 (proton acceptor) is an active-site residue. 4 disordered regions span residues 438–490, 501–520, 527–553, and 600–621; these read SVEN…SDSP, VEPHIGGNMPNGILKKNDTD, GTSVDLPNPSMIDRKSGVASVSTSPQS, and HREETLTRCRLKADERNRSDKP.

Belongs to the protein kinase superfamily. Ser/Thr protein kinase family. WNK subfamily.

It carries out the reaction L-seryl-[protein] + ATP = O-phospho-L-seryl-[protein] + ADP + H(+). It catalyses the reaction L-threonyl-[protein] + ATP = O-phospho-L-threonyl-[protein] + ADP + H(+). This Oryza sativa subsp. japonica (Rice) protein is Probable serine/threonine-protein kinase WNK2 (WNK2).